The primary structure comprises 227 residues: Cytochrome c oxidase subunit 2 (227 aa).

Residues 1–14 (MAYPFQLGLQDATS) are Mitochondrial intermembrane-facing. The chain crosses the membrane as a helical span at residues 15–45 (PIMEELTNFHDHTLMIVFLISSLVLYIISLM). Over 46–59 (LTTKLTHTSTMDAQ) the chain is Mitochondrial matrix. Residues 60–87 (EVETIWTILPAAILILIALPSLRILYMM) form a helical membrane-spanning segment. At 88–227 (DEINNPVLTV…YFENWSTSMI (140 aa)) the chain is on the mitochondrial intermembrane side. Cu cation contacts are provided by His161, Cys196, Glu198, Cys200, His204, and Met207. Position 198 (Glu198) interacts with Mg(2+). Tyr218 carries the phosphotyrosine modification.

It belongs to the cytochrome c oxidase subunit 2 family. Component of the cytochrome c oxidase (complex IV, CIV), a multisubunit enzyme composed of 14 subunits. The complex is composed of a catalytic core of 3 subunits MT-CO1, MT-CO2 and MT-CO3, encoded in the mitochondrial DNA, and 11 supernumerary subunits COX4I, COX5A, COX5B, COX6A, COX6B, COX6C, COX7A, COX7B, COX7C, COX8 and NDUFA4, which are encoded in the nuclear genome. The complex exists as a monomer or a dimer and forms supercomplexes (SCs) in the inner mitochondrial membrane with NADH-ubiquinone oxidoreductase (complex I, CI) and ubiquinol-cytochrome c oxidoreductase (cytochrome b-c1 complex, complex III, CIII), resulting in different assemblies (supercomplex SCI(1)III(2)IV(1) and megacomplex MCI(2)III(2)IV(2)). Found in a complex with TMEM177, COA6, COX18, COX20, SCO1 and SCO2. Interacts with TMEM177 in a COX20-dependent manner. Interacts with COX20. Interacts with COX16. It depends on Cu cation as a cofactor.

It is found in the mitochondrion inner membrane. The enzyme catalyses 4 Fe(II)-[cytochrome c] + O2 + 8 H(+)(in) = 4 Fe(III)-[cytochrome c] + 2 H2O + 4 H(+)(out). Functionally, component of the cytochrome c oxidase, the last enzyme in the mitochondrial electron transport chain which drives oxidative phosphorylation. The respiratory chain contains 3 multisubunit complexes succinate dehydrogenase (complex II, CII), ubiquinol-cytochrome c oxidoreductase (cytochrome b-c1 complex, complex III, CIII) and cytochrome c oxidase (complex IV, CIV), that cooperate to transfer electrons derived from NADH and succinate to molecular oxygen, creating an electrochemical gradient over the inner membrane that drives transmembrane transport and the ATP synthase. Cytochrome c oxidase is the component of the respiratory chain that catalyzes the reduction of oxygen to water. Electrons originating from reduced cytochrome c in the intermembrane space (IMS) are transferred via the dinuclear copper A center (CU(A)) of subunit 2 and heme A of subunit 1 to the active site in subunit 1, a binuclear center (BNC) formed by heme A3 and copper B (CU(B)). The BNC reduces molecular oxygen to 2 water molecules using 4 electrons from cytochrome c in the IMS and 4 protons from the mitochondrial matrix. The sequence is that of Cytochrome c oxidase subunit 2 (MT-CO2) from Arvicanthis somalicus (Neumann's grass rat).